A 2322-amino-acid chain; its full sequence is Protein sidekick homolog (2322 aa).

The N-terminal stretch at 1–26 (MNYRIFLLFCTTTVLWSVVSTQLVLG) is a signal peptide. The Extracellular portion of the chain corresponds to 27-2020 (KPPIFQNTGP…IPDDPFYTTW (1994 aa)). Ig-like C2-type domains follow at residues 28–105 (PPIF…AAIS), 217–319 (PSLQ…AYLT), and 324–397 (PVLK…ADMS). 3 disulfide bridges follow: cysteine 52–cysteine 94, cysteine 247–cysteine 301, and cysteine 345–cysteine 386. A glycan (N-linked (GlcNAc...) asparagine) is linked at asparagine 408. Ig-like C2-type domains follow at residues 450-545 (PFTS…VQVN) and 548-639 (SLIE…AMLQ). Intrachain disulfides connect cysteine 481/cysteine 529 and cysteine 569/cysteine 623. N-linked (GlcNAc...) asparagine glycans are attached at residues asparagine 633 and asparagine 656. Fibronectin type-III domains lie at 646–752 (MPER…MPQQ), 757–854 (APRN…TAEG), 859–958 (APKN…TEED), 962–1056 (AVDE…VPPE), 1060–1155 (RPSM…TLQT), 1160–1255 (PSQR…TYES), 1260–1360 (SPRN…TLED), 1364–1458 (PPES…SSVR), 1464–1567 (APAP…TLPS), 1572–1672 (QPIS…VGYS), 1674–1774 (PKRN…LEDK), 1777–1873 (PVGV…SKDG), and 1908–2010 (QAKR…VPES). The interval 732-762 (SNKHGPGKPSLPSSSVTMPQQPPSAAPRNVA) is disordered. N-linked (GlcNAc...) asparagine glycans are attached at residues asparagine 808, asparagine 869, asparagine 933, and asparagine 1017. The segment covering 1040–1049 (GDGPVEETKF) has biased composition (basic and acidic residues). Residues 1040 to 1060 (GDGPVEETKFESGVPPELPGR) are disordered. Residue asparagine 1108 is glycosylated (N-linked (GlcNAc...) asparagine). The interval 1139–1163 (GRGAPSEPSRTFETLQTNPETPSQR) is disordered. Positions 1146–1163 (PSRTFETLQTNPETPSQR) are enriched in polar residues. 3 N-linked (GlcNAc...) asparagine glycosylation sites follow: asparagine 1615, asparagine 1677, and asparagine 1864. The disordered stretch occupies residues 1916–1965 (EETENGYVSQRPRRNEIRGAKSAAQTSASSNSNRPTHPIGEWITLRPTDG). The span at 1935–1947 (AKSAAQTSASSNS) shows a compositional bias: low complexity. Residues 2021–2041 (WFMALVAMAAFVLIVIIIAIL) traverse the membrane as a helical segment. Over 2042–2322 (CVTGSSAKYR…NLTAGFSSFV (281 aa)) the chain is Cytoplasmic. Disordered regions lie at residues 2081–2114 (NMTR…SVLG), 2167–2254 (YVVS…ADDI), and 2276–2322 (MVRA…SSFV). Residues 2092–2101 (PGTTQSWLSD) show a composition bias toward polar residues. Residues 2207–2223 (PSSSGGSQPQGSPQQQQ) are compositionally biased toward low complexity. Residues 2227–2238 (DSFDEEDDVDDD) are compositionally biased toward acidic residues. Composition is skewed to polar residues over residues 2282–2302 (LTNQ…STSE) and 2310–2322 (ATPN…SSFV).

This sequence belongs to the sidekick family.

The protein resides in the membrane. Functionally, cell adhesion protein. The protein is Protein sidekick homolog (rig-4) of Caenorhabditis briggsae.